Here is a 455-residue protein sequence, read N- to C-terminus: Kynurenine 3-monooxygenase (455 aa).

2 helical membrane-spanning segments follow: residues 393 to 416 (WLFR…SMPY) and 429 to 453 (LLWR…YWQR).

The protein belongs to the aromatic-ring hydroxylase family. KMO subfamily. FAD is required as a cofactor.

The protein localises to the mitochondrion. Its subcellular location is the membrane. The enzyme catalyses L-kynurenine + NADPH + O2 + H(+) = 3-hydroxy-L-kynurenine + NADP(+) + H2O. Its pathway is cofactor biosynthesis; NAD(+) biosynthesis; quinolinate from L-kynurenine: step 1/3. Functionally, catalyzes the hydroxylation of L-kynurenine (L-Kyn) to form 3-hydroxy-L-kynurenine (L-3OHKyn). Required for synthesis of quinolinic acid. The chain is Kynurenine 3-monooxygenase from Drosophila willistoni (Fruit fly).